The primary structure comprises 127 residues: Protein ApaG (127 aa).

One can recognise an ApaG domain in the interval 3–127 (NDQKYDIKVQ…FILSVPRVLH (125 aa)).

The chain is Protein ApaG from Nitrosomonas eutropha (strain DSM 101675 / C91 / Nm57).